The primary structure comprises 211 residues: Tudor-interacting repair regulator protein (211 aa).

Residues lysine 10 and lysine 151 each participate in a glycyl lysine isopeptide (Lys-Gly) (interchain with G-Cter in ubiquitin) cross-link. Residues 118–205 are interaction with PXN; it reads TLEQLHAVEI…TEKQKKALEK (88 aa).

Belongs to the Nudix hydrolase family. TIRR subfamily. In terms of assembly, homodimer. Interacts with TP53BP1 (via the Tudor-like domain); interaction is abolished following DNA damage and TP53BP1 phosphorylation by ATM. Interacts (via the cytoplasmic part) with SDC4. Interacts with TGFB1I1 and PXN.

It is found in the nucleus. In terms of biological role, key regulator of TP53BP1 required to stabilize TP53BP1 and regulate its recruitment to chromatin. In absence of DNA damage, interacts with the tandem Tudor-like domain of TP53BP1, masking the region that binds histone H4 dimethylated at 'Lys-20' (H4K20me2), thereby preventing TP53BP1 recruitment to chromatin and maintaining TP53BP1 localization to the nucleus. Following DNA damage, ATM-induced phosphorylation of TP53BP1 and subsequent recruitment of RIF1 leads to dissociate NUDT16L1/TIRR from TP53BP1, unmasking the tandem Tudor-like domain and allowing recruitment of TP53BP1 to DNA double strand breaks (DSBs). Binds U8 snoRNA. This Homo sapiens (Human) protein is Tudor-interacting repair regulator protein.